A 373-amino-acid polypeptide reads, in one-letter code: ORC1-type DNA replication protein 2 (373 aa).

ATP contacts are provided by residues 63-67 (TGKTS), Tyr205, and Arg217.

This sequence belongs to the CDC6/cdc18 family.

Involved in regulation of DNA replication. This chain is ORC1-type DNA replication protein 2 (cdc6-2), found in Methanosarcina acetivorans (strain ATCC 35395 / DSM 2834 / JCM 12185 / C2A).